A 165-amino-acid chain; its full sequence is Large ribosomal subunit protein uL10 (165 aa).

An N6-acetyllysine mark is found at Lys-37 and Lys-105.

The protein belongs to the universal ribosomal protein uL10 family. Part of the ribosomal stalk of the 50S ribosomal subunit. The N-terminus interacts with L11 and the large rRNA to form the base of the stalk. The C-terminus forms an elongated spine to which L12 dimers bind in a sequential fashion forming a multimeric L10(L12)X complex.

Protein L10 is also a translational repressor protein. It controls the translation of the rplJL-rpoBC operon by binding to its mRNA. In terms of biological role, forms part of the ribosomal stalk, playing a central role in the interaction of the ribosome with GTP-bound translation factors. This Escherichia coli O6:H1 (strain CFT073 / ATCC 700928 / UPEC) protein is Large ribosomal subunit protein uL10 (rplJ).